We begin with the raw amino-acid sequence, 123 residues long: uncharacterized protein (123 aa).

This is an uncharacterized protein from Acanthamoeba polyphaga mimivirus (APMV).